A 577-amino-acid polypeptide reads, in one-letter code: Arginine--tRNA ligase (577 aa).

The 'HIGH' region signature appears at 122 to 132; that stretch reads PNVAKEMHVGH.

It belongs to the class-I aminoacyl-tRNA synthetase family. In terms of assembly, monomer.

The protein resides in the cytoplasm. It carries out the reaction tRNA(Arg) + L-arginine + ATP = L-arginyl-tRNA(Arg) + AMP + diphosphate. The chain is Arginine--tRNA ligase from Aliivibrio fischeri (strain ATCC 700601 / ES114) (Vibrio fischeri).